Here is a 219-residue protein sequence, read N- to C-terminus: Small ribosomal subunit protein uS3 (219 aa).

The region spanning 39–107 (LRKFLKKKLH…EVLIDIQEVR (69 aa)) is the KH type-2 domain.

The protein belongs to the universal ribosomal protein uS3 family. As to quaternary structure, part of the 30S ribosomal subunit. Forms a tight complex with proteins S10 and S14.

Binds the lower part of the 30S subunit head. Binds mRNA in the 70S ribosome, positioning it for translation. The polypeptide is Small ribosomal subunit protein uS3 (Desulfatibacillum aliphaticivorans).